The chain runs to 1823 residues: Bromodomain-containing protein DDB_G0280777 (1823 aa).

Disordered stretches follow at residues D44–E83 and L200–S281. Positions S65 to K77 are enriched in basic and acidic residues. A compositionally biased stretch (basic residues) spans K210–K224. The span at I225–Q250 shows a compositional bias: basic and acidic residues. Over residues Q251–Q262 the composition is skewed to low complexity. One can recognise a Bromo domain in the interval E306–V413. 8 disordered regions span residues E429–T654, N753–L781, I855–P886, N949–F993, L1055–S1079, I1190–S1386, Q1453–Q1477, and Q1679–Q1823. Low complexity-rich tracts occupy residues N432–L486, C494–S511, Q520–R555, and S570–L579. The span at A580 to N590 shows a compositional bias: polar residues. The span at M601–N614 shows a compositional bias: basic and acidic residues. Acidic residues predominate over residues E631–Q643. Composition is skewed to low complexity over residues N753–N779, N863–N884, N949–N958, L1055–L1071, and N1205–N1378. A compositionally biased stretch (low complexity) spans Q1679–Q1705. Basic and acidic residues-rich tracts occupy residues P1716–R1737 and K1744–L1755. 2 stretches are compositionally biased toward low complexity: residues N1756–V1767 and S1789–S1806. Basic residues predominate over residues K1813 to Q1823.

This is Bromodomain-containing protein DDB_G0280777 from Dictyostelium discoideum (Social amoeba).